The chain runs to 396 residues: Succinyl-CoA:mesaconate CoA-transferase (396 aa).

Catalysis depends on Asp175, which acts as the Nucleophile.

Belongs to the CoA-transferase III family. As to quaternary structure, homodimer.

It catalyses the reaction mesaconate + succinyl-CoA = 2-methylfumaryl-CoA + succinate. With respect to regulation, shows highest activity at 4 M KCl. Does not require divalent ions for activity. Functionally, involved in the methylaspartate cycle. Catalyzes the transfer of the CoA moiety from succinyl-CoA to mesaconate to generate mesaconyl-CoA (2-methylfumaryl-CoA) and succinate. Also shows high activity with methylsuccinate as CoA-acceptor, and only low activity with glutarate, acrylate and itaconate. Cannot use other CoA donors like acetyl-CoA, propionyl-CoA, butyryl-CoA or acetoacetyl-CoA. This chain is Succinyl-CoA:mesaconate CoA-transferase, found in Haloarcula hispanica (strain ATCC 33960 / DSM 4426 / JCM 8911 / NBRC 102182 / NCIMB 2187 / VKM B-1755).